We begin with the raw amino-acid sequence, 528 residues long: Ladinin-1 (528 aa).

Residues 1-404 form a disordered region; that stretch reads MSVSRKDWSA…NSETPLTRSA (404 aa). 5 positions are modified to phosphoserine: serine 38, serine 56, serine 62, serine 72, and serine 76. The span at 88–97 shows a compositional bias: basic residues; sequence RTRKERRQRR. Residue serine 119 is modified to Phosphoserine. The span at 134–173 shows a compositional bias: basic and acidic residues; sequence KKVEALPRRRLSREQRGPWAQDEERLKNRELAEGEKRLPE. 4 SEK repeats span residues 184-186, 190-192, 202-204, and 208-210; these read SEK. The 6 X SEK repeats stretch occupies residues 184-281; it reads SEKTPVSEKT…MQERKLVSEK (98 aa). 2 stretches are compositionally biased toward basic and acidic residues: residues 218 to 231 and 267 to 279; these read SLTEKRHSPEKLVP and IVSEKMQERKLVS. SEK repeat units lie at residues 269–271 and 279–281; these read SEK. The span at 304–316 shows a compositional bias: polar residues; it reads EQPQTTGGSQATT. A phosphoserine mark is found at serine 328, serine 358, serine 367, serine 405, and serine 496. Over residues 365 to 377 the composition is skewed to low complexity; sequence TPSPTLLTYSSSL. The segment at 492-528 is disordered; sequence KTQDSGDHGSQEVRKEASVTKRAQWGSKPSTSLDAEV. Residues 495-510 are compositionally biased toward basic and acidic residues; it reads DSGDHGSQEVRKEASV. Residues 518–528 are compositionally biased toward polar residues; the sequence is SKPSTSLDAEV.

As to expression, expressed in kidney, lung and keratinocytes followed by liver, spleen and brain. Not expressed in testis, skeletal and heart muscle and in fibroblasts.

Its subcellular location is the secreted. It is found in the extracellular space. The protein localises to the extracellular matrix. It localises to the basement membrane. Functionally, anchoring filament protein which is a component of the basement membrane zone. The polypeptide is Ladinin-1 (Lad1) (Mus musculus (Mouse)).